The primary structure comprises 456 residues: Serine--tRNA ligase (456 aa).

252 to 254 (TSE) lines the L-serine pocket. Residues 283–285 (RKE) and valine 299 contribute to the ATP site. Residue glutamate 306 coordinates L-serine. 370–373 (ELVS) contacts ATP. Threonine 404 is a binding site for L-serine.

The protein belongs to the class-II aminoacyl-tRNA synthetase family. Type-1 seryl-tRNA synthetase subfamily. Homodimer. The tRNA molecule binds across the dimer.

The protein localises to the cytoplasm. It carries out the reaction tRNA(Ser) + L-serine + ATP = L-seryl-tRNA(Ser) + AMP + diphosphate + H(+). The enzyme catalyses tRNA(Sec) + L-serine + ATP = L-seryl-tRNA(Sec) + AMP + diphosphate + H(+). It functions in the pathway aminoacyl-tRNA biosynthesis; selenocysteinyl-tRNA(Sec) biosynthesis; L-seryl-tRNA(Sec) from L-serine and tRNA(Sec): step 1/1. In terms of biological role, catalyzes the attachment of serine to tRNA(Ser). Is also able to aminoacylate tRNA(Sec) with serine, to form the misacylated tRNA L-seryl-tRNA(Sec), which will be further converted into selenocysteinyl-tRNA(Sec). The sequence is that of Serine--tRNA ligase from Korarchaeum cryptofilum (strain OPF8).